A 71-amino-acid chain; its full sequence is UPF0352 protein VCM66_1964 (71 aa).

This sequence belongs to the UPF0352 family.

The protein is UPF0352 protein VCM66_1964 of Vibrio cholerae serotype O1 (strain M66-2).